Here is a 368-residue protein sequence, read N- to C-terminus: GTPase Obg (368 aa).

Residues 1–161 (MRFVDEATIT…RSLRLELKIL (161 aa)) enclose the Obg domain. An OBG-type G domain is found at 162 to 337 (ADAGLLGLPN…VVAEMWRMRD (176 aa)). Residues 168-175 (GLPNAGKS), 193-197 (FTTLI), 217-220 (DIPG), 290-293 (NKID), and 318-320 (SAL) each bind GTP. Serine 175 and threonine 195 together coordinate Mg(2+).

This sequence belongs to the TRAFAC class OBG-HflX-like GTPase superfamily. OBG GTPase family. As to quaternary structure, monomer. Requires Mg(2+) as cofactor.

It is found in the cytoplasm. Functionally, an essential GTPase which binds GTP, GDP and possibly (p)ppGpp with moderate affinity, with high nucleotide exchange rates and a fairly low GTP hydrolysis rate. Plays a role in control of the cell cycle, stress response, ribosome biogenesis and in those bacteria that undergo differentiation, in morphogenesis control. This chain is GTPase Obg, found in Nitratidesulfovibrio vulgaris (strain DSM 19637 / Miyazaki F) (Desulfovibrio vulgaris).